A 417-amino-acid polypeptide reads, in one-letter code: Histidine--tRNA ligase (417 aa).

It belongs to the class-II aminoacyl-tRNA synthetase family. As to quaternary structure, homodimer.

It localises to the cytoplasm. It carries out the reaction tRNA(His) + L-histidine + ATP = L-histidyl-tRNA(His) + AMP + diphosphate + H(+). This chain is Histidine--tRNA ligase, found in Caldanaerobacter subterraneus subsp. tengcongensis (strain DSM 15242 / JCM 11007 / NBRC 100824 / MB4) (Thermoanaerobacter tengcongensis).